The chain runs to 284 residues: Pantothenate synthetase (284 aa).

Residue 30 to 37 (MGNLHEGH) coordinates ATP. His-37 (proton donor) is an active-site residue. Gln-61 is a binding site for (R)-pantoate. Gln-61 contributes to the beta-alanine binding site. 149–152 (GEKD) is an ATP binding site. Gln-155 provides a ligand contact to (R)-pantoate. ATP-binding positions include Val-178 and 186 to 189 (LSSR).

Belongs to the pantothenate synthetase family. Homodimer.

Its subcellular location is the cytoplasm. It carries out the reaction (R)-pantoate + beta-alanine + ATP = (R)-pantothenate + AMP + diphosphate + H(+). It functions in the pathway cofactor biosynthesis; (R)-pantothenate biosynthesis; (R)-pantothenate from (R)-pantoate and beta-alanine: step 1/1. In terms of biological role, catalyzes the condensation of pantoate with beta-alanine in an ATP-dependent reaction via a pantoyl-adenylate intermediate. The sequence is that of Pantothenate synthetase from Sodalis glossinidius (strain morsitans).